The following is a 102-amino-acid chain: Protein translation factor SUI1 homolog (102 aa).

Belongs to the SUI1 family.

The protein is Protein translation factor SUI1 homolog of Methanococcus vannielii.